We begin with the raw amino-acid sequence, 233 residues long: Sugar fermentation stimulation protein homolog (233 aa).

This sequence belongs to the SfsA family.

This chain is Sugar fermentation stimulation protein homolog, found in Rhodospirillum centenum (strain ATCC 51521 / SW).